A 320-amino-acid chain; its full sequence is MACENNLVVKQIMDLYNQISNLESLKPSKNVDTLFRQLVSTCLPTDTNIDVTEIHDEKVKDMRSHLIKLCGEAEGYLEQHFSAILGSFEDNPLNHLHIFPYYNNYLKLGKLEFDLLSQHTTHVPTKVAFIGSGPMPLTSIVLAKFHLPNTTFHNFDIDSHANTLASNLVSRDSDLSKRMIFHTTDVLNAKEGLDQYDVVFLAALVGMDKESKVKAIEHLEKHMAPGAVVMLRSAHGLRAFLYPIVDSCDLKGFEVLTIYHPSDDVVNSVVIARKLGGSNGARGSQIGRCVVMPCNCSKVHAILNNRGMEKNLIEEYSAIE.

This sequence belongs to the nicotianamine synthase (NAS)-like family.

It catalyses the reaction 3 S-adenosyl-L-methionine = nicotianamine + 3 S-methyl-5'-thioadenosine + 3 H(+). Functionally, synthesizes nicotianamine, a polyamine which serves as a sensor for the physiological iron status within the plant, and/or might be involved in the transport of iron. The sequence is that of Nicotianamine synthase 2 (NAS2) from Arabidopsis thaliana (Mouse-ear cress).